Reading from the N-terminus, the 255-residue chain is Type III pantothenate kinase (255 aa).

7 to 14 is an ATP binding site; that stretch reads DVGNTRLK. Substrate-binding positions include Tyr-96 and 103–106; that span reads GADR. Catalysis depends on Asp-105, which acts as the Proton acceptor. Position 133 (Thr-133) interacts with ATP. Thr-183 is a substrate binding site.

The protein belongs to the type III pantothenate kinase family. Homodimer. The cofactor is NH4(+). Requires K(+) as cofactor.

Its subcellular location is the cytoplasm. It catalyses the reaction (R)-pantothenate + ATP = (R)-4'-phosphopantothenate + ADP + H(+). It participates in cofactor biosynthesis; coenzyme A biosynthesis; CoA from (R)-pantothenate: step 1/5. Catalyzes the phosphorylation of pantothenate (Pan), the first step in CoA biosynthesis. This is Type III pantothenate kinase from Polaromonas sp. (strain JS666 / ATCC BAA-500).